Consider the following 681-residue polypeptide: Peroxisomal acyl-coenzyme A oxidase 2 (681 aa).

2 positions are modified to phosphoserine: Ser3 and Ser9. Thr13 is subject to Phosphothreonine. N6-succinyllysine occurs at positions 66, 137, 453, and 561. Positions 679–681 (SKL) match the Microbody targeting signal motif.

It belongs to the acyl-CoA oxidase family. Homodimer. The cofactor is FAD. Present in all tissues tested: heart, brain, placenta, lung, liver, skeletal muscle, kidney and pancreas. Most abundant in heart, liver and kidney.

The protein localises to the peroxisome. The enzyme catalyses (25R)-3alpha,7alpha,12alpha-trihydroxy-5beta-cholestan-26-oyl-CoA + A + H2O = (24R,25R)-3alpha,7alpha,12alpha,24-tetrahydroxy-5beta-cholestan-26-oyl-CoA + AH2. The catalysed reaction is (25S)-3alpha,7alpha,12alpha-trihydroxy-5beta-cholestan-26-oyl-CoA + O2 = (24E)-3alpha,7alpha,12alpha-trihydroxy-5beta-cholest-24-en-26-oyl-CoA + H2O2. In terms of biological role, oxidizes the CoA esters of the bile acid intermediates di- and tri-hydroxycholestanoic acids. Capable of oxidizing short as well as long chain 2-methyl branched fatty acids. This Homo sapiens (Human) protein is Peroxisomal acyl-coenzyme A oxidase 2.